The chain runs to 226 residues: Uridylate kinase (226 aa).

ATP is bound at residue 9–13; sequence KVSGK. Glycine 46 serves as a coordination point for UMP. Residues glycine 47 and arginine 51 each contribute to the ATP site. UMP-binding positions include aspartate 68 and 116–122; that span reads FQPGQST. ATP-binding residues include threonine 142, tyrosine 148, and aspartate 151.

Belongs to the UMP kinase family. As to quaternary structure, homohexamer.

The protein localises to the cytoplasm. It carries out the reaction UMP + ATP = UDP + ADP. It participates in pyrimidine metabolism; CTP biosynthesis via de novo pathway; UDP from UMP (UMPK route): step 1/1. Inhibited by UTP. Functionally, catalyzes the reversible phosphorylation of UMP to UDP. This chain is Uridylate kinase, found in Hyperthermus butylicus (strain DSM 5456 / JCM 9403 / PLM1-5).